The sequence spans 140 residues: MALTWPSSPPVLLTLLLSLLALQLCAVYGSYEHTCTLATRSRGAHPSGICGRNLARIVSVLCTPRGYVSNWFTKRSAPNKPAETFVDQNLRGVLLNKREALSYLRPREPRATRGTFGSQGITCECCFNQCTYYELLQYCN.

Positions 1–29 (MALTWPSSPPVLLTLLLSLLALQLCAVYG) are cleaved as a signal peptide. 4 disulfide bridges follow: Cys-35-Cys-123, Cys-50-Cys-126, Cys-62-Cys-139, and Cys-125-Cys-130. A propeptide spans 64-110 (PRGYVSNWFTKRSAPNKPAETFVDQNLRGVLLNKREALSYLRPREPR) (c peptide). At Glu-134 the chain carries 4-carboxyglutamate; partial.

Belongs to the insulin family. In terms of assembly, heterodimer of A and B chains; disulfide-linked. As to expression, expressed by the venom gland.

The protein localises to the secreted. In terms of biological role, this venom insulin facilitates prey capture by rapidly inducing hypoglycemic shock. Intraperitoneal injection of this peptide into zebrafish lowers blood glucose with the same potency than human insulin. In vivo, when applied to water, this peptide reduces overall locomotor activity of zebrafish larvae, observed as a significant decrease in the percentage of time spent swimming and movement frequency. The protein is Con-Ins Im2 of Conus imperialis (Imperial cone).